Here is a 410-residue protein sequence, read N- to C-terminus: Chorismate synthase (410 aa).

2 residues coordinate NADP(+): Arg43 and Arg49. Residues 143–145 (RSS), 264–265 (QA), Gly308, 323–327 (KPIST), and Arg349 each bind FMN.

The protein belongs to the chorismate synthase family. As to quaternary structure, homotetramer. The cofactor is FMNH2.

The catalysed reaction is 5-O-(1-carboxyvinyl)-3-phosphoshikimate = chorismate + phosphate. It functions in the pathway metabolic intermediate biosynthesis; chorismate biosynthesis; chorismate from D-erythrose 4-phosphate and phosphoenolpyruvate: step 7/7. Functionally, catalyzes the anti-1,4-elimination of the C-3 phosphate and the C-6 proR hydrogen from 5-enolpyruvylshikimate-3-phosphate (EPSP) to yield chorismate, which is the branch point compound that serves as the starting substrate for the three terminal pathways of aromatic amino acid biosynthesis. This reaction introduces a second double bond into the aromatic ring system. The chain is Chorismate synthase from Corynebacterium glutamicum (strain ATCC 13032 / DSM 20300 / JCM 1318 / BCRC 11384 / CCUG 27702 / LMG 3730 / NBRC 12168 / NCIMB 10025 / NRRL B-2784 / 534).